The sequence spans 192 residues: Protein A16 (192 aa).

The first 22 residues, 1–22, serve as a signal peptide directing secretion; it reads MLLANTAAAVLLLIVCIGASVG. Positions 71-186 constitute a C-type lectin domain; that stretch reads KNKKFTIGTL…CLNPLNIFPY (116 aa). A disulfide bridge links Cys163 with Cys177.

Expressed in the gut of adults.

This Anopheles gambiae (African malaria mosquito) protein is Protein A16 (CTL3).